The chain runs to 191 residues: Putative endogenous retrovirus group K member 11-1 Env polyprotein (191 aa).

Residues 1-191 (MPGAIDDHCP…DITLHPQGLV (191 aa)) are truncated surface protein.

The protein belongs to the beta type-B retroviral envelope protein family. HERV class-II K(HML-8) env subfamily. As to expression, cerebellum and testis.

The protein resides in the virion. Functionally, retroviral envelope proteins mediate receptor recognition and membrane fusion during early infection. Endogenous envelope proteins may have kept, lost or modified their original function during evolution. This Homo sapiens (Human) protein is Putative endogenous retrovirus group K member 11-1 Env polyprotein (ERVK11-1).